A 253-amino-acid polypeptide reads, in one-letter code: Phosphate import ATP-binding protein PstB (253 aa).

Residues 5–248 form the ABC transporter domain; it reads IETINLHVYY…PEHELTEKYV (244 aa). Residue 37-44 coordinates ATP; sequence GPSGCGKS.

It belongs to the ABC transporter superfamily. Phosphate importer (TC 3.A.1.7) family. The complex is composed of two ATP-binding proteins (PstB), two transmembrane proteins (PstC and PstA) and a solute-binding protein (PstS).

Its subcellular location is the cell membrane. It catalyses the reaction phosphate(out) + ATP + H2O = ADP + 2 phosphate(in) + H(+). In terms of biological role, part of the ABC transporter complex PstSACB involved in phosphate import. Responsible for energy coupling to the transport system. In Pyrococcus furiosus (strain ATCC 43587 / DSM 3638 / JCM 8422 / Vc1), this protein is Phosphate import ATP-binding protein PstB.